The chain runs to 934 residues: Serine/threonine-protein kinase PknD (934 aa).

One can recognise a Protein kinase domain in the interval 4–296 (YELIRLIGKG…ELRQALQPYL (293 aa)). Residues 10–18 (IGKGGMGEV) and lysine 33 contribute to the ATP site. Aspartate 138 functions as the Proton acceptor in the catalytic mechanism.

It belongs to the protein kinase superfamily. Ser/Thr protein kinase family. Post-translationally, autophosphorylated on serine and threonine residues.

It catalyses the reaction L-seryl-[protein] + ATP = O-phospho-L-seryl-[protein] + ADP + H(+). It carries out the reaction L-threonyl-[protein] + ATP = O-phospho-L-threonyl-[protein] + ADP + H(+). Its function is as follows. Together with the serine/threonine kinase Pkn1, may play a role in the specific interactions with host proteins during intracellular growth. The sequence is that of Serine/threonine-protein kinase PknD from Chlamydia trachomatis serovar A (strain ATCC VR-571B / DSM 19440 / HAR-13).